Here is a 96-residue protein sequence, read N- to C-terminus: Large ribosomal subunit protein uL23 (96 aa).

The protein belongs to the universal ribosomal protein uL23 family. Part of the 50S ribosomal subunit. Contacts protein L29, and trigger factor when it is bound to the ribosome.

Functionally, one of the early assembly proteins it binds 23S rRNA. One of the proteins that surrounds the polypeptide exit tunnel on the outside of the ribosome. Forms the main docking site for trigger factor binding to the ribosome. This is Large ribosomal subunit protein uL23 from Maridesulfovibrio salexigens (strain ATCC 14822 / DSM 2638 / NCIMB 8403 / VKM B-1763) (Desulfovibrio salexigens).